Reading from the N-terminus, the 333-residue chain is Tetraacyldisaccharide 4'-kinase (333 aa).

55–62 (TAGGNGKT) is a binding site for ATP.

Belongs to the LpxK family.

The enzyme catalyses a lipid A disaccharide + ATP = a lipid IVA + ADP + H(+). Its pathway is glycolipid biosynthesis; lipid IV(A) biosynthesis; lipid IV(A) from (3R)-3-hydroxytetradecanoyl-[acyl-carrier-protein] and UDP-N-acetyl-alpha-D-glucosamine: step 6/6. Functionally, transfers the gamma-phosphate of ATP to the 4'-position of a tetraacyldisaccharide 1-phosphate intermediate (termed DS-1-P) to form tetraacyldisaccharide 1,4'-bis-phosphate (lipid IVA). The sequence is that of Tetraacyldisaccharide 4'-kinase from Proteus mirabilis (strain HI4320).